Reading from the N-terminus, the 174-residue chain is Shikimate kinase 2 (174 aa).

12–17 (GCGKTT) contributes to the ATP binding site. Residues Thr-16 and Asp-32 each coordinate Mg(2+). Substrate-binding residues include Asp-34, Arg-58, and Gly-79. The LID domain stretch occupies residues 112–126 (RAYPEDDQRPSLTGK). Arg-120 is an ATP binding site. A substrate-binding site is contributed by Arg-139. Residue Gln-155 participates in ATP binding.

Belongs to the shikimate kinase family. AroL subfamily. As to quaternary structure, monomer. Requires Mg(2+) as cofactor.

Its subcellular location is the cytoplasm. It carries out the reaction shikimate + ATP = 3-phosphoshikimate + ADP + H(+). It participates in metabolic intermediate biosynthesis; chorismate biosynthesis; chorismate from D-erythrose 4-phosphate and phosphoenolpyruvate: step 5/7. Its function is as follows. Catalyzes the specific phosphorylation of the 3-hydroxyl group of shikimic acid using ATP as a cosubstrate. The protein is Shikimate kinase 2 of Sodalis glossinidius (strain morsitans).